The sequence spans 254 residues: Alcohol dehydrogenase (254 aa).

10–33 (FVAGLGGIGLDTSREIVKSGPKNL) contributes to the NAD(+) binding site. Ser138 contacts substrate. The active-site Proton acceptor is the Tyr151.

This sequence belongs to the short-chain dehydrogenases/reductases (SDR) family. As to quaternary structure, homodimer.

The enzyme catalyses a primary alcohol + NAD(+) = an aldehyde + NADH + H(+). The catalysed reaction is a secondary alcohol + NAD(+) = a ketone + NADH + H(+). In Drosophila lacicola (Fruit fly), this protein is Alcohol dehydrogenase (Adh1).